Consider the following 249-residue polypeptide: Proteasome subunit alpha type-3 (249 aa).

This sequence belongs to the peptidase T1A family. The 26S proteasome consists of a 20S proteasome core and two 19S regulatory subunits. The 20S proteasome core is composed of 28 subunits that are arranged in four stacked rings, resulting in a barrel-shaped structure. The two end rings are each formed by seven alpha subunits, and the two central rings are each formed by seven beta subunits. The catalytic chamber with the active sites is on the inside of the barrel.

It localises to the cytoplasm. Its subcellular location is the nucleus. Its function is as follows. The proteasome is a multicatalytic proteinase complex which is characterized by its ability to cleave peptides with Arg, Phe, Tyr, Leu, and Glu adjacent to the leaving group at neutral or slightly basic pH. The proteasome has an ATP-dependent proteolytic activity. The protein is Proteasome subunit alpha type-3 (PAG1) of Spinacia oleracea (Spinach).